The primary structure comprises 209 residues: Protein Bel-1 (209 aa).

Disordered regions lie at residues 1 to 30 (MASKYPEEGPITEGVEEDFNSHSTSGLDLT), 123 to 143 (FLNSRKESGTPKTDPTRPATS), and 156 to 185 (CSRPTPSNSESVCNGLGQPSERGHTSGESG). Polar residues-rich tracts occupy residues 21 to 30 (SHSTSGLDLT) and 132 to 143 (TPKTDPTRPATS).

Transcriptional transactivator that activates the viral internal promoter (IP), thereby enhancing its own expression. This transactivation is repressed by nuclear factor I. Also transactivates the long terminal repeat (LTR) promoter, thereby inducing structural gene expression, initiating the late phase of infection. It is therefore a key regulator of viral gene expression. It directly binds to and activates DNA target sites of viral promoters and those of distinct cellular genes. Required for viral replication. This Felis catus (Cat) protein is Protein Bel-1 (bel1).